The chain runs to 110 residues: Large ribosomal subunit protein uL22 (110 aa).

It belongs to the universal ribosomal protein uL22 family. As to quaternary structure, part of the 50S ribosomal subunit.

Functionally, this protein binds specifically to 23S rRNA; its binding is stimulated by other ribosomal proteins, e.g. L4, L17, and L20. It is important during the early stages of 50S assembly. It makes multiple contacts with different domains of the 23S rRNA in the assembled 50S subunit and ribosome. In terms of biological role, the globular domain of the protein is located near the polypeptide exit tunnel on the outside of the subunit, while an extended beta-hairpin is found that lines the wall of the exit tunnel in the center of the 70S ribosome. The protein is Large ribosomal subunit protein uL22 of Bdellovibrio bacteriovorus (strain ATCC 15356 / DSM 50701 / NCIMB 9529 / HD100).